A 262-amino-acid polypeptide reads, in one-letter code: Hydroxyethylthiazole kinase (262 aa).

Methionine 50 provides a ligand contact to substrate. ATP is bound by residues arginine 125 and threonine 171. Glycine 198 is a binding site for substrate.

This sequence belongs to the Thz kinase family. The cofactor is Mg(2+).

The catalysed reaction is 5-(2-hydroxyethyl)-4-methylthiazole + ATP = 4-methyl-5-(2-phosphooxyethyl)-thiazole + ADP + H(+). It functions in the pathway cofactor biosynthesis; thiamine diphosphate biosynthesis; 4-methyl-5-(2-phosphoethyl)-thiazole from 5-(2-hydroxyethyl)-4-methylthiazole: step 1/1. In terms of biological role, catalyzes the phosphorylation of the hydroxyl group of 4-methyl-5-beta-hydroxyethylthiazole (THZ). This is Hydroxyethylthiazole kinase from Escherichia coli O139:H28 (strain E24377A / ETEC).